Here is a 322-residue protein sequence, read N- to C-terminus: Phosphatidylserine decarboxylase proenzyme (322 aa).

Active-site charge relay system; for autoendoproteolytic cleavage activity residues include aspartate 90, histidine 147, and serine 254. Serine 254 acts as the Schiff-base intermediate with substrate; via pyruvic acid; for decarboxylase activity in catalysis. Serine 254 carries the post-translational modification Pyruvic acid (Ser); by autocatalysis. Positions 294-322 are disordered; that stretch reads EVEPAPLPADEIKAEHDASPLVDNKKDDT. The span at 303–322 shows a compositional bias: basic and acidic residues; sequence DEIKAEHDASPLVDNKKDDT.

This sequence belongs to the phosphatidylserine decarboxylase family. PSD-B subfamily. Prokaryotic type I sub-subfamily. In terms of assembly, heterodimer of a large membrane-associated beta subunit and a small pyruvoyl-containing alpha subunit. Requires pyruvate as cofactor. In terms of processing, is synthesized initially as an inactive proenzyme. Formation of the active enzyme involves a self-maturation process in which the active site pyruvoyl group is generated from an internal serine residue via an autocatalytic post-translational modification. Two non-identical subunits are generated from the proenzyme in this reaction, and the pyruvate is formed at the N-terminus of the alpha chain, which is derived from the carboxyl end of the proenzyme. The autoendoproteolytic cleavage occurs by a canonical serine protease mechanism, in which the side chain hydroxyl group of the serine supplies its oxygen atom to form the C-terminus of the beta chain, while the remainder of the serine residue undergoes an oxidative deamination to produce ammonia and the pyruvoyl prosthetic group on the alpha chain. During this reaction, the Ser that is part of the protease active site of the proenzyme becomes the pyruvoyl prosthetic group, which constitutes an essential element of the active site of the mature decarboxylase.

It is found in the cell membrane. The enzyme catalyses a 1,2-diacyl-sn-glycero-3-phospho-L-serine + H(+) = a 1,2-diacyl-sn-glycero-3-phosphoethanolamine + CO2. Its pathway is phospholipid metabolism; phosphatidylethanolamine biosynthesis; phosphatidylethanolamine from CDP-diacylglycerol: step 2/2. Catalyzes the formation of phosphatidylethanolamine (PtdEtn) from phosphatidylserine (PtdSer). This chain is Phosphatidylserine decarboxylase proenzyme, found in Salmonella paratyphi C (strain RKS4594).